Here is a 416-residue protein sequence, read N- to C-terminus: Phosphoglycerate kinase (416 aa).

Substrate contacts are provided by residues 28-30 (DMN), arginine 44, 65-68 (HQSR), arginine 122, and arginine 162. ATP contacts are provided by residues glutamate 337 and 362-365 (GGHI).

The protein belongs to the phosphoglycerate kinase family. In terms of assembly, monomer.

The protein localises to the cytoplasm. It carries out the reaction (2R)-3-phosphoglycerate + ATP = (2R)-3-phospho-glyceroyl phosphate + ADP. It participates in carbohydrate degradation; glycolysis; pyruvate from D-glyceraldehyde 3-phosphate: step 2/5. The chain is Phosphoglycerate kinase from Methanosarcina mazei (strain ATCC BAA-159 / DSM 3647 / Goe1 / Go1 / JCM 11833 / OCM 88) (Methanosarcina frisia).